The sequence spans 348 residues: MAEQQKGLTYADAGVDIDAGNALVERIKPAAKRTARPGTVSGLGGFGALFDLKAAGYQDPVLVAATDGVGTKLRIAIDTGEVDTIGIDLVAMCVNDLVCQGAEPLFFLDYFATGKLEVAQAARIIEGIAEGCAASGCALIGGETAEMPGMYHKGDFDLAGFAVGAMERGADLPQGVAEGDLLLGLGSNGVHSNGYSFVRKVVELSGLGWDAPAPFGGDSLGRALLAPTRLYVKQALAAVRAGGVHALAHITGGGLTENLPRVLPKGLGARIDLSAWELPPVFRWLAETASMAEPELLKTFNCGIGMIVVVAADRADEIAALLAAEGETVTRIGEVIAGEGVSYDGRLL.

The protein belongs to the AIR synthase family.

The protein localises to the cytoplasm. The enzyme catalyses 2-formamido-N(1)-(5-O-phospho-beta-D-ribosyl)acetamidine + ATP = 5-amino-1-(5-phospho-beta-D-ribosyl)imidazole + ADP + phosphate + H(+). Its pathway is purine metabolism; IMP biosynthesis via de novo pathway; 5-amino-1-(5-phospho-D-ribosyl)imidazole from N(2)-formyl-N(1)-(5-phospho-D-ribosyl)glycinamide: step 2/2. This Cereibacter sphaeroides (strain ATCC 17023 / DSM 158 / JCM 6121 / CCUG 31486 / LMG 2827 / NBRC 12203 / NCIMB 8253 / ATH 2.4.1.) (Rhodobacter sphaeroides) protein is Phosphoribosylformylglycinamidine cyclo-ligase.